The primary structure comprises 918 residues: Bromodomain testis-specific protein (918 aa).

A disordered region spans residues 1–26 (MSDVKPPQHFTMNGNPPPPEFKNPKK). A Bromo 1 domain is found at 29–135 (RLTNHLQYIE…KLFLEKVAEM (107 aa)). Positions 204–215 (NGVKRKADTTTP) match the Nuclear localization signal motif. 5 disordered regions span residues 241 to 267 (RGSG…GRRT), 379 to 430 (EPKN…RAHR), 575 to 712 (KNKP…SLVS), 738 to 764 (IPPL…SSSQ), and 862 to 899 (DTPK…AMSG). Positions 267 to 376 (TKLSERLKYC…DVFEFRFSKI (110 aa)) constitute a Bromo 2 domain. Low complexity predominate over residues 399–416 (SPSSSESSDSESSSPENS). A coiled-coil region spans residues 426-452 (ERAHRLASLEEQQLKAVREQLQLLTQT). The NET domain occupies 496-578 (DSEEEMNTLP…GCLRKKKNKP (83 aa)). The span at 575-584 (KNKPPKKSKI) shows a compositional bias: basic residues. Residues 605–617 (KIETDGEIKDTTH) are compositionally biased toward basic and acidic residues. Low complexity-rich tracts occupy residues 622 to 648 (SDSS…DSDS) and 739 to 764 (PPLL…SSSQ). The stretch at 815 to 902 (EKELTTASRG…RREAMSGVID (88 aa)) forms a coiled coil. Residues 877 to 896 (VDREREMARKREQERRRREA) are compositionally biased toward basic and acidic residues.

This sequence belongs to the BET family.

The protein localises to the nucleus. Testis-specific chromatin protein that specifically binds histone H4 acetylated at 'Lys-5' and 'Lys-8' (H4K5ac and H4K8ac, respectively) and plays a key role in spermatogenesis. Required in late pachytene spermatocytes: plays a role in meiotic and post-meiotic cells by binding to acetylated histones at the promoter of specific meiotic and post-meiotic genes, facilitating their activation at the appropriate time. In the post-meiotic phase of spermatogenesis, binds to hyperacetylated histones and participates in their general removal from DNA. Also recognizes and binds a subset of butyrylated histones: able to bind histone H4 butyrylated at 'Lys-8' (H4K8ac), while it is not able to bind H4 butyrylated at 'Lys-5' (H4K5ac). This is Bromodomain testis-specific protein (brdt) from Danio rerio (Zebrafish).